We begin with the raw amino-acid sequence, 423 residues long: Levansucrase (423 aa).

The sucrose site is built by tryptophan 47, aspartate 48, serine 119, arginine 193, and aspartate 194. Residue aspartate 48 is the Nucleophile of the active site. Residue glutamate 278 is the Proton donor/acceptor of the active site.

Belongs to the glycosyl hydrolase 68 family.

The protein localises to the secreted. It catalyses the reaction [6)-beta-D-fructofuranosyl-(2-&gt;](n) alpha-D-glucopyranoside + sucrose = [6)-beta-D-fructofuranosyl-(2-&gt;](n+1) alpha-D-glucopyranoside + D-glucose. Its function is as follows. Catalyzes the synthesis of levan, a fructose polymer, by transferring the fructosyl moiety from sucrose to a growing acceptor molecule. In Zymomonas mobilis subsp. mobilis (strain ATCC 10988 / DSM 424 / LMG 404 / NCIMB 8938 / NRRL B-806 / ZM1), this protein is Levansucrase.